Here is a 564-residue protein sequence, read N- to C-terminus: Dihydroxy-acid dehydratase (564 aa).

Cys51 contributes to the [2Fe-2S] cluster binding site. Asp83 serves as a coordination point for Mg(2+). Position 124 (Cys124) interacts with [2Fe-2S] cluster. Asp125 and Lys126 together coordinate Mg(2+). Lys126 carries the N6-carboxylysine modification. Cys196 serves as a coordination point for [2Fe-2S] cluster. Glu448 lines the Mg(2+) pocket. Ser474 serves as the catalytic Proton acceptor.

Belongs to the IlvD/Edd family. Homodimer. It depends on [2Fe-2S] cluster as a cofactor. Mg(2+) serves as cofactor.

The catalysed reaction is (2R)-2,3-dihydroxy-3-methylbutanoate = 3-methyl-2-oxobutanoate + H2O. The enzyme catalyses (2R,3R)-2,3-dihydroxy-3-methylpentanoate = (S)-3-methyl-2-oxopentanoate + H2O. Its pathway is amino-acid biosynthesis; L-isoleucine biosynthesis; L-isoleucine from 2-oxobutanoate: step 3/4. It participates in amino-acid biosynthesis; L-valine biosynthesis; L-valine from pyruvate: step 3/4. Functionally, functions in the biosynthesis of branched-chain amino acids. Catalyzes the dehydration of (2R,3R)-2,3-dihydroxy-3-methylpentanoate (2,3-dihydroxy-3-methylvalerate) into 2-oxo-3-methylpentanoate (2-oxo-3-methylvalerate) and of (2R)-2,3-dihydroxy-3-methylbutanoate (2,3-dihydroxyisovalerate) into 2-oxo-3-methylbutanoate (2-oxoisovalerate), the penultimate precursor to L-isoleucine and L-valine, respectively. The sequence is that of Dihydroxy-acid dehydratase from Polynucleobacter asymbioticus (strain DSM 18221 / CIP 109841 / QLW-P1DMWA-1) (Polynucleobacter necessarius subsp. asymbioticus).